We begin with the raw amino-acid sequence, 334 residues long: tRNA N6-adenosine threonylcarbamoyltransferase (334 aa).

Residues His112 and His116 each coordinate Fe cation. Substrate contacts are provided by residues 135 to 139, Asp168, Gly181, Asp185, and Asn274; that span reads VVSGG. Residue Asp303 participates in Fe cation binding.

This sequence belongs to the KAE1 / TsaD family. The cofactor is Fe(2+).

Its subcellular location is the cytoplasm. It catalyses the reaction L-threonylcarbamoyladenylate + adenosine(37) in tRNA = N(6)-L-threonylcarbamoyladenosine(37) in tRNA + AMP + H(+). Functionally, required for the formation of a threonylcarbamoyl group on adenosine at position 37 (t(6)A37) in tRNAs that read codons beginning with adenine. Is involved in the transfer of the threonylcarbamoyl moiety of threonylcarbamoyl-AMP (TC-AMP) to the N6 group of A37, together with TsaE and TsaB. TsaD likely plays a direct catalytic role in this reaction. The chain is tRNA N6-adenosine threonylcarbamoyltransferase from Anaeromyxobacter dehalogenans (strain 2CP-C).